Here is a 1345-residue protein sequence, read N- to C-terminus: Rho guanine nucleotide exchange factor 10 (1345 aa).

Disordered regions lie at residues 1–84 (MEQG…PAKL) and 99–120 (TPLQ…GVGL). Residues 22–39 (NNEEEGELFDFDSGDEVP) are compositionally biased toward acidic residues. The span at 40-54 (EADRQVPSADDRTRG) shows a compositional bias: basic and acidic residues. Polar residues predominate over residues 102 to 111 (QEDQPSSPDA). Serine 157 carries the post-translational modification Phosphoserine. Disordered regions lie at residues 158–195 (VEEE…SALA) and 207–273 (MENP…IPRS). A compositionally biased stretch (polar residues) spans 171–191 (QCNSLSSEDLPHSSEQGSQEG). A compositionally biased stretch (acidic residues) spans 224–239 (DSEPDEMIYDDVENGE). Over residues 242-255 (GNSSPEYGWSSSEF) the composition is skewed to low complexity. Positions 307-335 (GAMEIQQAKQRQERKMQKLMKAAKEGTKD) form a coiled coil. At serine 355 the chain carries Phosphoserine. In terms of domain architecture, DH spans 397–584 (VRRYILGSIV…ETLAEKLNER (188 aa)). Disordered regions lie at residues 1202–1237 (DRAR…QPDT) and 1253–1306 (KNDL…RASS). Residues 1256–1271 (LSSSSGSLNLSHGSSS) show a composition bias toward low complexity. Residue serine 1262 is modified to Phosphoserine. N5-methylglutamine is present on glutamine 1314.

Methylated at Gln-1314 by N6AMT1. Ubiquitously expressed.

May play a role in developmental myelination of peripheral nerves. The polypeptide is Rho guanine nucleotide exchange factor 10 (Arhgef10) (Mus musculus (Mouse)).